We begin with the raw amino-acid sequence, 353 residues long: UPF0283 membrane protein YcjF (353 aa).

A compositionally biased stretch (basic and acidic residues) spans 1-19; the sequence is MSEPLKPRIDFAEPLKEEP. A disordered region spans residues 1 to 35; that stretch reads MSEPLKPRIDFAEPLKEEPTSAFKAQQTFSEAESR. A run of 3 helical transmembrane segments spans residues 70 to 90, 100 to 120, and 213 to 233; these read MVMGGLALFGASVVGQGVQWT, VALGGCAAGALIIGAGVGSVV, and ESTLMIAVSPLALVDMAFIAW.

It belongs to the UPF0283 family.

It localises to the cell inner membrane. This Salmonella paratyphi C (strain RKS4594) protein is UPF0283 membrane protein YcjF.